A 590-amino-acid chain; its full sequence is Proline--tRNA ligase (590 aa).

The protein belongs to the class-II aminoacyl-tRNA synthetase family. ProS type 1 subfamily. In terms of assembly, homodimer.

It localises to the cytoplasm. It carries out the reaction tRNA(Pro) + L-proline + ATP = L-prolyl-tRNA(Pro) + AMP + diphosphate. Functionally, catalyzes the attachment of proline to tRNA(Pro) in a two-step reaction: proline is first activated by ATP to form Pro-AMP and then transferred to the acceptor end of tRNA(Pro). As ProRS can inadvertently accommodate and process non-cognate amino acids such as alanine and cysteine, to avoid such errors it has two additional distinct editing activities against alanine. One activity is designated as 'pretransfer' editing and involves the tRNA(Pro)-independent hydrolysis of activated Ala-AMP. The other activity is designated 'posttransfer' editing and involves deacylation of mischarged Ala-tRNA(Pro). The misacylated Cys-tRNA(Pro) is not edited by ProRS. The protein is Proline--tRNA ligase of Leifsonia xyli subsp. xyli (strain CTCB07).